Consider the following 396-residue polypeptide: Putative 2-hydroxyacid dehydrogenase YPL113C (396 aa).

NAD(+)-binding positions include 227-228 (SI), 311-313 (VGR), and D337. Residue R313 is part of the active site. Residue E342 is part of the active site. H361 functions as the Proton donor in the catalytic mechanism. NAD(+) is bound at residue 361 to 364 (HIGS).

The protein belongs to the D-isomer specific 2-hydroxyacid dehydrogenase family.

Putative 2-hydroxyacid dehydrogenase. This is Putative 2-hydroxyacid dehydrogenase YPL113C from Saccharomyces cerevisiae (strain ATCC 204508 / S288c) (Baker's yeast).